A 184-amino-acid polypeptide reads, in one-letter code: ATP synthase subunit delta (184 aa).

It belongs to the ATPase delta chain family. F-type ATPases have 2 components, F(1) - the catalytic core - and F(0) - the membrane proton channel. F(1) has five subunits: alpha(3), beta(3), gamma(1), delta(1), epsilon(1). F(0) has three main subunits: a(1), b(2) and c(10-14). The alpha and beta chains form an alternating ring which encloses part of the gamma chain. F(1) is attached to F(0) by a central stalk formed by the gamma and epsilon chains, while a peripheral stalk is formed by the delta and b chains.

The protein resides in the cell membrane. In terms of biological role, f(1)F(0) ATP synthase produces ATP from ADP in the presence of a proton or sodium gradient. F-type ATPases consist of two structural domains, F(1) containing the extramembraneous catalytic core and F(0) containing the membrane proton channel, linked together by a central stalk and a peripheral stalk. During catalysis, ATP synthesis in the catalytic domain of F(1) is coupled via a rotary mechanism of the central stalk subunits to proton translocation. Its function is as follows. This protein is part of the stalk that links CF(0) to CF(1). It either transmits conformational changes from CF(0) to CF(1) or is implicated in proton conduction. The chain is ATP synthase subunit delta from Rickettsia africae (strain ESF-5).